Here is a 252-residue protein sequence, read N- to C-terminus: Type II secretion system protein N (252 aa).

The Cytoplasmic portion of the chain corresponds to 1-4 (MKNR). Residues 5–25 (LTIGLLLAAIYLFWLLLSAPA) traverse the membrane as a helical segment. At 26-252 (RLLALTLSDD…QGEWLSEEKK (227 aa)) the chain is on the periplasmic side.

It belongs to the GSP N family.

Its subcellular location is the cell inner membrane. Functionally, involved in a type II secretion system (T2SS, formerly general secretion pathway, GSP) for the export of proteins. Required for the translocation of pullulanase. The chain is Type II secretion system protein N (pulN) from Klebsiella pneumoniae.